A 101-amino-acid chain; its full sequence is U-scoloptoxin(10)-Sm2a (101 aa).

Residues 1–23 (MNKSMIILCAVLFLTYIIEENEA) form the signal peptide.

The protein belongs to the scoloptoxin-10 family. In terms of processing, contains 3 disulfide bonds. In terms of tissue distribution, expressed by the venom gland.

Its subcellular location is the secreted. The polypeptide is U-scoloptoxin(10)-Sm2a (Scolopendra morsitans (Tanzanian blue ringleg centipede)).